The chain runs to 207 residues: NAD(P)H-quinone oxidoreductase subunit K, chloroplastic (207 aa).

Residues cysteine 47, cysteine 48, cysteine 112, and cysteine 143 each coordinate [4Fe-4S] cluster.

This sequence belongs to the complex I 20 kDa subunit family. NDH is composed of at least 16 different subunits, 5 of which are encoded in the nucleus. [4Fe-4S] cluster serves as cofactor.

It is found in the plastid. The protein resides in the chloroplast thylakoid membrane. The catalysed reaction is a plastoquinone + NADH + (n+1) H(+)(in) = a plastoquinol + NAD(+) + n H(+)(out). It carries out the reaction a plastoquinone + NADPH + (n+1) H(+)(in) = a plastoquinol + NADP(+) + n H(+)(out). NDH shuttles electrons from NAD(P)H:plastoquinone, via FMN and iron-sulfur (Fe-S) centers, to quinones in the photosynthetic chain and possibly in a chloroplast respiratory chain. The immediate electron acceptor for the enzyme in this species is believed to be plastoquinone. Couples the redox reaction to proton translocation, and thus conserves the redox energy in a proton gradient. In Psilotum nudum (Whisk fern), this protein is NAD(P)H-quinone oxidoreductase subunit K, chloroplastic.